The chain runs to 318 residues: HTH-type transcriptional regulatory protein TyrR (318 aa).

The region spanning 15–239 (FIVQSEAMKS…LYNTLYRACS (225 aa)) is the Sigma-54 factor interaction; truncated domain. ATP-binding positions include 43 to 50 (GETGSGKD) and 101 to 110 (ANKGTVLLDG). The segment at residues 292–312 (STRKLAQRLGVSHTAIANKLK) is a DNA-binding region (H-T-H motif).

Homodimer. In presence of tyrosine (or high concentrations of phenylalanine or tryptophan) and ATP, it self-associates to form a hexamer.

Its subcellular location is the cytoplasm. Its activity is regulated as follows. The DNA binding ability is drastically reduced in the presence of ATP. Tyrosine further reduces the binding affinity of TyrR in the presence of ATP. Its function is as follows. Transcriptional regulator of the TyrR regulon, which includes a number of genes coding for proteins involved in the biosynthesis or transport of the three aromatic amino acids, phenylalanine, tyrosine and tryptophan. These three aromatic amino acids act as effectors which bind to the TyrR protein to form an active regulatory protein. Acts by binding specifically to TyrR boxes in the promoter region of the target genes. Can efficiently repress the transcription of the aroF promoter, but lacks the ability to function as a transcriptional activator. The protein is HTH-type transcriptional regulatory protein TyrR of Haemophilus influenzae (strain ATCC 51907 / DSM 11121 / KW20 / Rd).